Consider the following 325-residue polypeptide: Holliday junction branch migration complex subunit RuvB (325 aa).

The interval 1–172 (MENNELLDIT…FGVVFRLEFY (172 aa)) is large ATPase domain (RuvB-L). Residues leucine 11, arginine 12, glycine 53, lysine 56, threonine 57, threonine 58, 119-121 (EDF), arginine 162, tyrosine 172, and arginine 209 each bind ATP. Mg(2+) is bound at residue threonine 57. Residues 173–243 (NSEELKEIVK…IAQEALIAMD (71 aa)) form a small ATPAse domain (RuvB-S) region. The head domain (RuvB-H) stretch occupies residues 246 to 325 (DYGLDDMDRK…LKRKIPERLF (80 aa)). DNA is bound by residues arginine 301 and arginine 306.

Belongs to the RuvB family. Homohexamer. Forms an RuvA(8)-RuvB(12)-Holliday junction (HJ) complex. HJ DNA is sandwiched between 2 RuvA tetramers; dsDNA enters through RuvA and exits via RuvB. An RuvB hexamer assembles on each DNA strand where it exits the tetramer. Each RuvB hexamer is contacted by two RuvA subunits (via domain III) on 2 adjacent RuvB subunits; this complex drives branch migration. In the full resolvosome a probable DNA-RuvA(4)-RuvB(12)-RuvC(2) complex forms which resolves the HJ.

It is found in the cytoplasm. The enzyme catalyses ATP + H2O = ADP + phosphate + H(+). The RuvA-RuvB-RuvC complex processes Holliday junction (HJ) DNA during genetic recombination and DNA repair, while the RuvA-RuvB complex plays an important role in the rescue of blocked DNA replication forks via replication fork reversal (RFR). RuvA specifically binds to HJ cruciform DNA, conferring on it an open structure. The RuvB hexamer acts as an ATP-dependent pump, pulling dsDNA into and through the RuvAB complex. RuvB forms 2 homohexamers on either side of HJ DNA bound by 1 or 2 RuvA tetramers; 4 subunits per hexamer contact DNA at a time. Coordinated motions by a converter formed by DNA-disengaged RuvB subunits stimulates ATP hydrolysis and nucleotide exchange. Immobilization of the converter enables RuvB to convert the ATP-contained energy into a lever motion, pulling 2 nucleotides of DNA out of the RuvA tetramer per ATP hydrolyzed, thus driving DNA branch migration. The RuvB motors rotate together with the DNA substrate, which together with the progressing nucleotide cycle form the mechanistic basis for DNA recombination by continuous HJ branch migration. Branch migration allows RuvC to scan DNA until it finds its consensus sequence, where it cleaves and resolves cruciform DNA. The polypeptide is Holliday junction branch migration complex subunit RuvB (Thermodesulfovibrio yellowstonii (strain ATCC 51303 / DSM 11347 / YP87)).